The following is a 538-amino-acid chain: Chaperonin GroEL 1 (538 aa).

ATP is bound by residues 29–32 (TLGP), 86–90 (DGTTT), Gly413, and Asp494.

This sequence belongs to the chaperonin (HSP60) family. In terms of assembly, forms a cylinder of 14 subunits composed of two heptameric rings stacked back-to-back. Interacts with the co-chaperonin GroES.

The protein resides in the cytoplasm. The enzyme catalyses ATP + H2O + a folded polypeptide = ADP + phosphate + an unfolded polypeptide.. Its function is as follows. Together with its co-chaperonin GroES, plays an essential role in assisting protein folding. The GroEL-GroES system forms a nano-cage that allows encapsulation of the non-native substrate proteins and provides a physical environment optimized to promote and accelerate protein folding. This chain is Chaperonin GroEL 1, found in Mycobacterium avium (strain 104).